The sequence spans 104 residues: Large ribosomal subunit protein uL24 (104 aa).

The protein belongs to the universal ribosomal protein uL24 family. Part of the 50S ribosomal subunit.

One of two assembly initiator proteins, it binds directly to the 5'-end of the 23S rRNA, where it nucleates assembly of the 50S subunit. Functionally, one of the proteins that surrounds the polypeptide exit tunnel on the outside of the subunit. The protein is Large ribosomal subunit protein uL24 of Brevibacillus brevis (strain 47 / JCM 6285 / NBRC 100599).